A 255-amino-acid polypeptide reads, in one-letter code: Ribonuclease HII (255 aa).

The region spanning 72-255 is the RNase H type-2 domain; that stretch reads RLIAGVDEAG…KTFAPVQSYC (184 aa). A divalent metal cation contacts are provided by Asp78, Glu79, and Asp170.

It belongs to the RNase HII family. Mn(2+) serves as cofactor. The cofactor is Mg(2+).

The protein resides in the cytoplasm. The enzyme catalyses Endonucleolytic cleavage to 5'-phosphomonoester.. Functionally, endonuclease that specifically degrades the RNA of RNA-DNA hybrids. This chain is Ribonuclease HII, found in Bacillus velezensis (strain DSM 23117 / BGSC 10A6 / LMG 26770 / FZB42) (Bacillus amyloliquefaciens subsp. plantarum).